A 931-amino-acid polypeptide reads, in one-letter code: Translation initiation factor IF-2 (931 aa).

The segment at 32 to 310 (KSASSTVEPP…SSKARKNRLA (279 aa)) is disordered. The segment covering 50–59 (FASSGQGNAS) has biased composition (polar residues). Residues 82–96 (PAAPSAPKPAAPAAP) show a composition bias toward pro residues. The span at 156-168 (GNAPQGGNNANGA) shows a compositional bias: low complexity. Composition is skewed to gly residues over residues 217 to 238 (RPGQ…GGAK), 248 to 271 (GQGG…GFQG), and 281 to 298 (ARGG…GRQG). The tr-type G domain occupies 424–596 (PRPPVVTVMG…VLLTADAELD (173 aa)). A G1 region spans residues 433-440 (GHVDHGKT). Residue 433–440 (GHVDHGKT) participates in GTP binding. Residues 458–462 (GITQR) are G2. Positions 483–486 (DTPG) are G3. Residues 483–487 (DTPGH) and 537–540 (NKID) each bind GTP. Positions 537–540 (NKID) are G4. The tract at residues 573–575 (SAK) is G5.

This sequence belongs to the TRAFAC class translation factor GTPase superfamily. Classic translation factor GTPase family. IF-2 subfamily.

Its subcellular location is the cytoplasm. Its function is as follows. One of the essential components for the initiation of protein synthesis. Protects formylmethionyl-tRNA from spontaneous hydrolysis and promotes its binding to the 30S ribosomal subunits. Also involved in the hydrolysis of GTP during the formation of the 70S ribosomal complex. The protein is Translation initiation factor IF-2 of Bifidobacterium adolescentis (strain ATCC 15703 / DSM 20083 / NCTC 11814 / E194a).